The chain runs to 390 residues: Small ribosomal subunit protein uS9m (390 aa).

The interval 368-390 (PRIRERKKPGQEGARRKFTWKKR) is disordered.

The protein belongs to the universal ribosomal protein uS9 family. Component of the mitochondrial ribosome small subunit (28S) which comprises a 12S rRNA and about 30 distinct proteins.

Its subcellular location is the mitochondrion. The polypeptide is Small ribosomal subunit protein uS9m (Mrps9) (Mus musculus (Mouse)).